The primary structure comprises 230 residues: Thymidylate kinase (230 aa).

23 to 30 (GIDGAGKT) is a binding site for ATP.

Belongs to the thymidylate kinase family.

The catalysed reaction is dTMP + ATP = dTDP + ADP. Functionally, phosphorylation of dTMP to form dTDP in both de novo and salvage pathways of dTTP synthesis. In Ureaplasma parvum serovar 3 (strain ATCC 27815 / 27 / NCTC 11736), this protein is Thymidylate kinase.